Consider the following 273-residue polypeptide: 3-methyl-2-oxobutanoate hydroxymethyltransferase (273 aa).

Mg(2+)-binding residues include D49 and D88. Residues D49–S50, D88, and K118 contribute to the 3-methyl-2-oxobutanoate site. E120 provides a ligand contact to Mg(2+). E187 functions as the Proton acceptor in the catalytic mechanism.

It belongs to the PanB family. Homodecamer; pentamer of dimers. It depends on Mg(2+) as a cofactor.

It localises to the cytoplasm. It catalyses the reaction 3-methyl-2-oxobutanoate + (6R)-5,10-methylene-5,6,7,8-tetrahydrofolate + H2O = 2-dehydropantoate + (6S)-5,6,7,8-tetrahydrofolate. Its pathway is cofactor biosynthesis; (R)-pantothenate biosynthesis; (R)-pantoate from 3-methyl-2-oxobutanoate: step 1/2. Its function is as follows. Catalyzes the reversible reaction in which hydroxymethyl group from 5,10-methylenetetrahydrofolate is transferred onto alpha-ketoisovalerate to form ketopantoate. This chain is 3-methyl-2-oxobutanoate hydroxymethyltransferase, found in Rhizobium etli (strain ATCC 51251 / DSM 11541 / JCM 21823 / NBRC 15573 / CFN 42).